A 117-amino-acid polypeptide reads, in one-letter code: Immunoglobulin heavy variable 1-3 (117 aa).

Residues 1-19 form the signal peptide; sequence MDWTWRILFLVAAATGAHS. Residues 20–44 form a framework-1 region; it reads QVQLVQSGAEVKKPGASVKVSCKAS. Residues 20-117 form the Ig-like domain; the sequence is QVQLVQSGAE…EDTAVYYCAR (98 aa). Cysteine 41 and cysteine 115 are oxidised to a cystine. A complementarity-determining-1 region spans residues 45–52; the sequence is GYTFTSYA. Positions 53–69 are framework-2; that stretch reads MHWVRQAPGQRLEWMGW. Positions 70 to 77 are complementarity-determining-2; the sequence is INAGNGNT. The interval 78-115 is framework-3; it reads KYSQKFQGRVTITRDTSASTAYMELSSLRSEDTAVYYC. Residues 116 to 117 are complementarity-determining-3; it reads AR.

In terms of assembly, immunoglobulins are composed of two identical heavy chains and two identical light chains; disulfide-linked.

Its subcellular location is the secreted. It is found in the cell membrane. Its function is as follows. V region of the variable domain of immunoglobulin heavy chains that participates in the antigen recognition. Immunoglobulins, also known as antibodies, are membrane-bound or secreted glycoproteins produced by B lymphocytes. In the recognition phase of humoral immunity, the membrane-bound immunoglobulins serve as receptors which, upon binding of a specific antigen, trigger the clonal expansion and differentiation of B lymphocytes into immunoglobulins-secreting plasma cells. Secreted immunoglobulins mediate the effector phase of humoral immunity, which results in the elimination of bound antigens. The antigen binding site is formed by the variable domain of one heavy chain, together with that of its associated light chain. Thus, each immunoglobulin has two antigen binding sites with remarkable affinity for a particular antigen. The variable domains are assembled by a process called V-(D)-J rearrangement and can then be subjected to somatic hypermutations which, after exposure to antigen and selection, allow affinity maturation for a particular antigen. This chain is Immunoglobulin heavy variable 1-3, found in Homo sapiens (Human).